The following is a 714-amino-acid chain: Fatty acid oxidation complex subunit alpha (714 aa).

An enoyl-CoA hydratase region spans residues 1–190 (MDTVSAFKLE…KAGLVDEVVP (190 aa)). The tract at residues 306-714 (GSLRSVAVLG…TFWPADERLT (409 aa)) is 3-hydroxyacyl-CoA dehydrogenase.

This sequence in the N-terminal section; belongs to the enoyl-CoA hydratase/isomerase family. In the central section; belongs to the 3-hydroxyacyl-CoA dehydrogenase family. As to quaternary structure, heterotetramer of two alpha chains (FadJ) and two beta chains (FadI).

The protein localises to the cytoplasm. The catalysed reaction is a (3S)-3-hydroxyacyl-CoA = a (2E)-enoyl-CoA + H2O. It catalyses the reaction a 4-saturated-(3S)-3-hydroxyacyl-CoA = a (3E)-enoyl-CoA + H2O. The enzyme catalyses a (3S)-3-hydroxyacyl-CoA + NAD(+) = a 3-oxoacyl-CoA + NADH + H(+). It carries out the reaction (3S)-3-hydroxybutanoyl-CoA = (3R)-3-hydroxybutanoyl-CoA. It participates in lipid metabolism; fatty acid beta-oxidation. In terms of biological role, catalyzes the formation of a hydroxyacyl-CoA by addition of water on enoyl-CoA. Also exhibits 3-hydroxyacyl-CoA epimerase and 3-hydroxyacyl-CoA dehydrogenase activities. This chain is Fatty acid oxidation complex subunit alpha, found in Klebsiella pneumoniae subsp. pneumoniae (strain ATCC 700721 / MGH 78578).